A 399-amino-acid polypeptide reads, in one-letter code: Rho GTPase-activating protein gacC (399 aa).

Positions Met1–Ser13 are enriched in basic and acidic residues. The interval Met1–Lys80 is disordered. Residues Asp14 to Ser31 show a composition bias toward polar residues. Low complexity predominate over residues Ser61–Val79. The Rho-GAP domain occupies Val186 to Phe375.

The protein resides in the cytoplasm. Rho GTPase-activating protein involved in the signal transduction pathway. The chain is Rho GTPase-activating protein gacC (gacC) from Dictyostelium discoideum (Social amoeba).